The following is a 499-amino-acid chain: GTPase Der (499 aa).

The 164-residue stretch at 3 to 166 folds into the EngA-type G 1 domain; that stretch reads PVIALVGRPN…QALGIFPKDN (164 aa). Residues 9 to 16, 56 to 60, and 118 to 121 each bind GTP; these read GRPNVGKS, DTGGI, and NKVD. The disordered stretch occupies residues 166–199; that stretch reads NADENAEGEEGGELAEGEEVVAEGQEPKRIPGPS. Over residues 168–186 the composition is skewed to acidic residues; sequence DENAEGEEGGELAEGEEVV. Over residues 190–199 the composition is skewed to basic and acidic residues; the sequence is QEPKRIPGPS. An EngA-type G 2 domain is found at 204–377; that stretch reads IKIAIIGRPN…SVQAAFKSAI (174 aa). GTP-binding positions include 210-217, 257-261, and 322-325; these read GRPNVGKS, DTAGV, and NKWD. The 85-residue stretch at 378 to 462 folds into the KH-like domain; the sequence is TRWPTSRLTQ…PIRIEYKGGD (85 aa). Over residues 459–472 the composition is skewed to basic and acidic residues; it reads KGGDNPYEGKKNTL. The tract at residues 459 to 499 is disordered; it reads KGGDNPYEGKKNTLTDRQVNKKRRLMSHHKKAEKKRRDKKR. A compositionally biased stretch (basic residues) spans 478–499; the sequence is NKKRRLMSHHKKAEKKRRDKKR.

This sequence belongs to the TRAFAC class TrmE-Era-EngA-EngB-Septin-like GTPase superfamily. EngA (Der) GTPase family. In terms of assembly, associates with the 50S ribosomal subunit.

GTPase that plays an essential role in the late steps of ribosome biogenesis. The protein is GTPase Der of Stutzerimonas stutzeri (strain A1501) (Pseudomonas stutzeri).